The following is a 213-amino-acid chain: MSDMYCGIGKIPKGKERGTPEYCVQSNQVRYYGLKKIDRSLLETAKVKKTSLVKEQTKLNNLIEKGKQMLKEYNNLKLIINDEKSSKSAVNKARKRMEEIVLRKDRFVKDVKKQREIVNDLIEKEKEEEKAAKKAEKAEEKKKQSKNSTSKSGSKSSKSSSGSSKSSSKSSKSSKSSSGSSKSSSKSSKNSKKSSKKSNFRTQFGGKPTGQIW.

2 coiled-coil regions span residues 54–78 (KEQT…NLKL) and 108–151 (VKDV…STSK). The segment covering 122–142 (IEKEKEEEKAAKKAEKAEEKK) has biased composition (basic and acidic residues). A disordered region spans residues 122 to 213 (IEKEKEEEKA…FGGKPTGQIW (92 aa)). Over residues 146 to 188 (KNSTSKSGSKSSKSSSGSSKSSSKSSKSSKSSSGSSKSSSKSS) the composition is skewed to low complexity. Basic residues predominate over residues 189 to 199 (KNSKKSSKKSN).

It belongs to the mimivirus R546 family.

This is an uncharacterized protein from Acanthamoeba polyphaga (Amoeba).